The following is a 301-amino-acid chain: Pyridoxal 5'-phosphate synthase subunit Pdx1 (301 aa).

Aspartate 26 contacts D-ribose 5-phosphate. Lysine 83 functions as the Schiff-base intermediate with D-ribose 5-phosphate in the catalytic mechanism. A D-ribose 5-phosphate-binding site is contributed by glycine 155. Arginine 167 lines the D-glyceraldehyde 3-phosphate pocket. Residues glycine 216 and 237–238 (GS) each bind D-ribose 5-phosphate.

Belongs to the PdxS/SNZ family. In terms of assembly, homohexamer and homododecamer. In the presence of Pdx2, forms a dodecamer of heterodimers.

It localises to the cytoplasm. It catalyses the reaction aldehydo-D-ribose 5-phosphate + D-glyceraldehyde 3-phosphate + L-glutamine = pyridoxal 5'-phosphate + L-glutamate + phosphate + 3 H2O + H(+). The protein operates within cofactor biosynthesis; pyridoxal 5'-phosphate biosynthesis. In terms of biological role, catalyzes the formation of pyridoxal 5'-phosphate from ribose 5-phosphate (RBP), glyceraldehyde 3-phosphate (G3P) and ammonia. The ammonia is provided by Pdx2. Can also use ribulose 5-phosphate and dihydroxyacetone phosphate as substrates, resulting from enzyme-catalyzed isomerization of RBP and G3P, respectively. The protein is Pyridoxal 5'-phosphate synthase subunit Pdx1 (pdx1) of Plasmodium falciparum (isolate 3D7).